The following is a 355-amino-acid chain: Tetraacyldisaccharide 4'-kinase (355 aa).

Residue 64–71 (YVGGTGKT) coordinates ATP. The tract at residues 206–226 (NRAPQSSATPTAASGQGPRRA) is disordered. Residues 208 to 222 (APQSSATPTAASGQG) are compositionally biased toward low complexity.

It belongs to the LpxK family.

The catalysed reaction is a lipid A disaccharide + ATP = a lipid IVA + ADP + H(+). The protein operates within glycolipid biosynthesis; lipid IV(A) biosynthesis; lipid IV(A) from (3R)-3-hydroxytetradecanoyl-[acyl-carrier-protein] and UDP-N-acetyl-alpha-D-glucosamine: step 6/6. Its function is as follows. Transfers the gamma-phosphate of ATP to the 4'-position of a tetraacyldisaccharide 1-phosphate intermediate (termed DS-1-P) to form tetraacyldisaccharide 1,4'-bis-phosphate (lipid IVA). The protein is Tetraacyldisaccharide 4'-kinase of Bordetella petrii (strain ATCC BAA-461 / DSM 12804 / CCUG 43448).